Consider the following 1144-residue polypeptide: PAN2-PAN3 deadenylation complex catalytic subunit PAN2 (1144 aa).

4 WD repeats span residues 27-66 (KKEK…YTRH), 153-193 (SSTY…VIHS), 196-233 (GHSA…NVYD), and 302-341 (HPCK…SGFT). A linker region spans residues 344–481 (AAVLEYQDYP…LLEYKPSNNI (138 aa)). The 406-residue stretch at 482–887 (DIPPAYSKLQ…TPEIVVYSDA (406 aa)) folds into the USP domain. In terms of domain architecture, Exonuclease spans 939–1110 (VALDAEFVSL…EDAHTALLLY (172 aa)). A divalent metal cation is bound by residues D942, E944, D1051, and D1102.

It belongs to the peptidase C19 family. PAN2 subfamily. In terms of assembly, forms a heterotrimer with an asymmetric homodimer of the regulatory subunit PAN3 to form the poly(A)-nuclease (PAN) deadenylation complex. The cofactor is a divalent metal cation.

It is found in the cytoplasm. The enzyme catalyses Exonucleolytic cleavage of poly(A) to 5'-AMP.. Positively regulated by the regulatory subunit PAN3. Catalytic subunit of the poly(A)-nuclease (PAN) deadenylation complex, one of two cytoplasmic mRNA deadenylases involved in mRNA turnover. PAN specifically shortens poly(A) tails of RNA and the activity is stimulated by poly(A)-binding protein PAB1. PAN deadenylation is followed by rapid degradation of the shortened mRNA tails by the CCR4-NOT complex. Deadenylated mRNAs are then degraded by two alternative mechanisms, namely exosome-mediated 3'-5' exonucleolytic degradation, or deadenylation-dependent mRNA decaping and subsequent 5'-3' exonucleolytic degradation by XRN1. May also be involved in post-transcriptional maturation of mRNA poly(A) tails. This chain is PAN2-PAN3 deadenylation complex catalytic subunit PAN2, found in Kluyveromyces lactis (strain ATCC 8585 / CBS 2359 / DSM 70799 / NBRC 1267 / NRRL Y-1140 / WM37) (Yeast).